Consider the following 146-residue polypeptide: MSETFTKGMARNIYFGGSVFFILLFLALTYHTEKTLPERTNEAAMSAAVVRGKLVWEQNNCVGCHTLLGEGAYFAPELGNVVGRRGGEEGFNTFLQAWMNIQPLNVPGRRAMPQFHLSEGQVDDLAEFLKWSSKIDTNQWPPNKEG.

The helical; Signal-anchor transmembrane segment at 13–29 (IYFGGSVFFILLFLALT) threads the bilayer. Residues Cys-61, Cys-64, and His-65 each contribute to the heme c site.

As to quaternary structure, heterodimer of cytochromes b (large subunit) and c (small subunit).

Its subcellular location is the cell membrane. Functionally, component of the anaerobic respiratory chain that transforms nitrate to dinitrogen (denitrification). The polypeptide is Nitric oxide reductase subunit C (norC) (Pseudomonas aeruginosa (strain ATCC 15692 / DSM 22644 / CIP 104116 / JCM 14847 / LMG 12228 / 1C / PRS 101 / PAO1)).